An 893-amino-acid chain; its full sequence is Sulfate permease 2 (893 aa).

The disordered stretch occupies residues 1-25 (MSREGYPNFEEVEIPDFQETNNTVP). The Cytoplasmic segment spans residues 1–131 (MSREGYPNFE…VFPIINWLPH (131 aa)). A helical transmembrane segment spans residues 132-152 (YNFSWFTADLIAGITIGCVLV). The Extracellular portion of the chain corresponds to 153–163 (PQSMSYAQVAT). A helical transmembrane segment spans residues 164–184 (LPAQYGLYSSFIGAYSYSFFA). At 185–188 (TSKD) the chain is on the cytoplasmic side. A helical transmembrane segment spans residues 189 to 209 (VCIGPVAVMSLQTAKVIADVT). Over 210–221 (AKYPDGDSAITG) the chain is Extracellular. A helical transmembrane segment spans residues 222-242 (PVIATTLALLCGIISAAVGFL). Residues 243 to 244 (RL) lie on the Cytoplasmic side of the membrane. A helical membrane pass occupies residues 245 to 265 (GFLVELISLNAVAGFMTGSAF). Over 266–305 (NILWGQVPALMGYNSLVNTRAATYKVVIETLKHLPDTKLD) the chain is Extracellular. The chain crosses the membrane as a helical span at residues 306 to 326 (AVFGLIPLFLLYVWKWWCGTY). Residues 327–350 (GPRLNDRYNSKNPRLHKIIKWTYF) are Cytoplasmic-facing. The helical transmembrane segment at 351-371 (YAQASRNGIIIIVFTCIGWAI) threads the bilayer. Topologically, residues 372–399 (TRGKSKSERPISILGSVPSGLKEVGVFH) are extracellular. A helical membrane pass occupies residues 400–420 (VPPGLMSKLGPNLPASIIVLL). The Cytoplasmic portion of the chain corresponds to 421-443 (LEHIAISKSFGRINDYKVVPDQE). The helical transmembrane segment at 444–464 (LIAIGVSNLLGTFFNAYPATG) threads the bilayer. The Extracellular segment spans residues 465–483 (SFSRSALKAKCNVRTPLSG). Residues 484 to 504 (LFSGSCVLLALYCLTGAFFYI) form a helical membrane-spanning segment. The Cytoplasmic segment spans residues 505-532 (PKATLSAVIIHAVSDLLASYQTTWNFWK). Residues 533 to 551 (MNPLDFICFIVTVLITVFA) form a helical membrane-spanning segment. Residues 552-559 (SIEDGIYF) lie on the Extracellular side of the membrane. Residues 560-580 (AMCWSCAMLILKVAFPAGKFL) traverse the membrane as a helical segment. Over 581-893 (GRVEVAEVTD…DIPDFAKWDI (313 aa)) the chain is Cytoplasmic. In terms of domain architecture, STAS spans 676 to 854 (DVQILPPPDG…SIVAGHTSYH (179 aa)).

It belongs to the SLC26A/SulP transporter (TC 2.A.53) family.

The protein localises to the membrane. High affinity uptake of sulfate into the cell. The chain is Sulfate permease 2 (SUL2) from Saccharomyces cerevisiae (strain ATCC 204508 / S288c) (Baker's yeast).